Consider the following 151-residue polypeptide: Arginine repressor (151 aa).

It belongs to the ArgR family.

It localises to the cytoplasm. The protein operates within amino-acid biosynthesis; L-arginine biosynthesis [regulation]. In terms of biological role, regulates arginine biosynthesis genes. The polypeptide is Arginine repressor (Haemophilus influenzae (strain PittGG)).